The following is a 156-amino-acid chain: UPF0266 membrane protein NT01EI_1718 (156 aa).

Transmembrane regions (helical) follow at residues 6-26 (IALLVFIVLFLLYAIYDEAIM), 46-63 (DSLIFIGLLAILVYRNIS), and 67-87 (APFTTWLLATLMVVAIYIFYL).

Belongs to the UPF0266 family.

It is found in the cell inner membrane. The protein is UPF0266 membrane protein NT01EI_1718 of Edwardsiella ictaluri (strain 93-146).